The chain runs to 793 residues: Putative glutamate--cysteine ligase 2-3 (793 aa).

The segment at 1–407 (MLASDPRKVG…RFWDRGDTAD (407 aa)) is carboxylate-amine ligase. The segment at 367 to 390 (TEHLPDVEVPPPREPGPKSTGAGR) is disordered. Positions 408–793 (MTWTESTELD…ALTRLEDQSG (386 aa)) are peptidase M20.

It in the C-terminal section; belongs to the glutamate--cysteine ligase type 2 family. YbdK subfamily.

It carries out the reaction L-cysteine + L-glutamate + ATP = gamma-L-glutamyl-L-cysteine + ADP + phosphate + H(+). Its function is as follows. ATP-dependent carboxylate-amine ligase which exhibits weak glutamate--cysteine ligase activity. In Rhodococcus jostii (strain RHA1), this protein is Putative glutamate--cysteine ligase 2-3.